A 234-amino-acid chain; its full sequence is Phosphoglycolate phosphatase (234 aa).

Residue Asp15 is the Nucleophile of the active site. The Mg(2+) site is built by Asp15, Asp17, and Asp177.

The protein belongs to the HAD-like hydrolase superfamily. CbbY/CbbZ/Gph/YieH family. In terms of assembly, monomer. Mg(2+) serves as cofactor. Chloride is required as a cofactor.

It catalyses the reaction 2-phosphoglycolate + H2O = glycolate + phosphate. It participates in organic acid metabolism; glycolate biosynthesis; glycolate from 2-phosphoglycolate: step 1/1. Its function is as follows. Specifically catalyzes the dephosphorylation of 2-phosphoglycolate. Is involved in the dissimilation of the intracellular 2-phosphoglycolate formed during the DNA repair of 3'-phosphoglycolate ends, a major class of DNA lesions induced by oxidative stress. This Photorhabdus laumondii subsp. laumondii (strain DSM 15139 / CIP 105565 / TT01) (Photorhabdus luminescens subsp. laumondii) protein is Phosphoglycolate phosphatase.